Reading from the N-terminus, the 237-residue chain is Endoglucanase-1 (237 aa).

An N-terminal signal peptide occupies residues 1 to 16; that stretch reads MKAFHLLAALAGAAVA. Gln17 carries the post-translational modification Pyrrolidone carboxylic acid.

This sequence belongs to the glycosyl hydrolase 12 (cellulase H) family.

It localises to the secreted. The enzyme catalyses Endohydrolysis of (1-&gt;4)-beta-D-glucosidic linkages in cellulose, lichenin and cereal beta-D-glucans.. This is Endoglucanase-1 from Aspergillus aculeatus.